The sequence spans 348 residues: 3-methyl-2-oxobutanoate dehydrogenase subunit beta (348 aa).

Thiamine diphosphate is bound by residues Glu-51, 80–82 (LAE), Gln-104, and 108–111 (FSYP). Substrate is bound by residues 105–108 (FDGF) and His-151. His-151 serves as the catalytic Proton acceptor.

Heteromer of E1 alpha (BkdA) and beta (BkdB) subunits. Part of the BCKADH complex, consisting of multiple copies of BkdA/BkdB (E1), BkdC (E2) and Lpd (E3). The cofactor is thiamine diphosphate.

It carries out the reaction N(6)-[(R)-lipoyl]-L-lysyl-[protein] + 3-methyl-2-oxobutanoate + H(+) = N(6)-[(R)-S(8)-2-methylpropanoyldihydrolipoyl]-L-lysyl-[protein] + CO2. In terms of biological role, component of the branched-chain alpha-ketoacid dehydrogenase (BCKADH) complex, that catalyzes the overall conversion of branched-chain alpha-ketoacids to acyl-CoA and CO(2). This is 3-methyl-2-oxobutanoate dehydrogenase subunit beta (bkdB) from Mycobacterium tuberculosis (strain CDC 1551 / Oshkosh).